Consider the following 692-residue polypeptide: DNA ligase (692 aa).

NAD(+) contacts are provided by residues 34 to 38 (DAEYD), 83 to 84 (SL), and glutamate 124. Catalysis depends on lysine 126, which acts as the N6-AMP-lysine intermediate. Positions 147, 193, 310, and 334 each coordinate NAD(+). Zn(2+)-binding residues include cysteine 428, cysteine 431, cysteine 446, and cysteine 452. The region spanning 612–692 (AGVAGVSGKT…ALLALLAGNA (81 aa)) is the BRCT domain.

Belongs to the NAD-dependent DNA ligase family. LigA subfamily. It depends on Mg(2+) as a cofactor. The cofactor is Mn(2+).

The enzyme catalyses NAD(+) + (deoxyribonucleotide)n-3'-hydroxyl + 5'-phospho-(deoxyribonucleotide)m = (deoxyribonucleotide)n+m + AMP + beta-nicotinamide D-nucleotide.. In terms of biological role, DNA ligase that catalyzes the formation of phosphodiester linkages between 5'-phosphoryl and 3'-hydroxyl groups in double-stranded DNA using NAD as a coenzyme and as the energy source for the reaction. It is essential for DNA replication and repair of damaged DNA. The protein is DNA ligase of Laribacter hongkongensis (strain HLHK9).